A 310-amino-acid polypeptide reads, in one-letter code: Putative S-adenosyl-L-methionine-dependent methyltransferase MSMEG_1888/MSMEI_1848 (310 aa).

S-adenosyl-L-methionine contacts are provided by residues Asp-128 and 157 to 158 (DL).

It belongs to the UPF0677 family.

Exhibits S-adenosyl-L-methionine-dependent methyltransferase activity. The chain is Putative S-adenosyl-L-methionine-dependent methyltransferase MSMEG_1888/MSMEI_1848 from Mycolicibacterium smegmatis (strain ATCC 700084 / mc(2)155) (Mycobacterium smegmatis).